The following is a 382-amino-acid chain: UDP-4-amino-4-deoxy-L-arabinose--oxoglutarate aminotransferase (382 aa).

K182 is subject to N6-(pyridoxal phosphate)lysine.

It belongs to the DegT/DnrJ/EryC1 family. ArnB subfamily. As to quaternary structure, homodimer. It depends on pyridoxal 5'-phosphate as a cofactor.

It catalyses the reaction UDP-4-amino-4-deoxy-beta-L-arabinose + 2-oxoglutarate = UDP-beta-L-threo-pentopyranos-4-ulose + L-glutamate. The protein operates within nucleotide-sugar biosynthesis; UDP-4-deoxy-4-formamido-beta-L-arabinose biosynthesis; UDP-4-deoxy-4-formamido-beta-L-arabinose from UDP-alpha-D-glucuronate: step 2/3. Its pathway is bacterial outer membrane biogenesis; lipopolysaccharide biosynthesis. Catalyzes the conversion of UDP-4-keto-arabinose (UDP-Ara4O) to UDP-4-amino-4-deoxy-L-arabinose (UDP-L-Ara4N). The modified arabinose is attached to lipid A and is required for resistance to polymyxin and cationic antimicrobial peptides. In Pectobacterium atrosepticum (strain SCRI 1043 / ATCC BAA-672) (Erwinia carotovora subsp. atroseptica), this protein is UDP-4-amino-4-deoxy-L-arabinose--oxoglutarate aminotransferase.